A 324-amino-acid polypeptide reads, in one-letter code: Cytochrome f (324 aa).

Residues 1 to 30 (MNMRFSPKALVRQLGRLSLVACLSLGLLGA) form the signal peptide. 4 residues coordinate heme: Tyr42, Cys62, Cys65, and His66. The chain crosses the membrane as a helical span at residues 290 to 310 (VLGVIAFFFAVMLAQIMLVLK).

The protein belongs to the cytochrome f family. As to quaternary structure, the 4 large subunits of the cytochrome b6-f complex are cytochrome b6, subunit IV (17 kDa polypeptide, PetD), cytochrome f and the Rieske protein, while the 4 small subunits are PetG, PetL, PetM and PetN. The complex functions as a dimer. Heme is required as a cofactor.

Its subcellular location is the cellular thylakoid membrane. In terms of biological role, component of the cytochrome b6-f complex, which mediates electron transfer between photosystem II (PSII) and photosystem I (PSI), cyclic electron flow around PSI, and state transitions. The chain is Cytochrome f from Synechococcus elongatus (strain ATCC 33912 / PCC 7942 / FACHB-805) (Anacystis nidulans R2).